The following is a 98-amino-acid chain: NADH-ubiquinone oxidoreductase chain 4L (98 aa).

3 consecutive transmembrane segments (helical) span residues 1 to 21, 28 to 48, and 59 to 79; these read MMPI…GTLI, STLL…AMLI, and APLI…ALLV.

It belongs to the complex I subunit 4L family. Core subunit of respiratory chain NADH dehydrogenase (Complex I) which is composed of 45 different subunits.

Its subcellular location is the mitochondrion inner membrane. The catalysed reaction is a ubiquinone + NADH + 5 H(+)(in) = a ubiquinol + NAD(+) + 4 H(+)(out). Core subunit of the mitochondrial membrane respiratory chain NADH dehydrogenase (Complex I) which catalyzes electron transfer from NADH through the respiratory chain, using ubiquinone as an electron acceptor. Part of the enzyme membrane arm which is embedded in the lipid bilayer and involved in proton translocation. The sequence is that of NADH-ubiquinone oxidoreductase chain 4L (MT-ND4L) from Petaurus breviceps (Australian sugar glider).